Consider the following 172-residue polypeptide: Tail tube protein (172 aa).

This sequence belongs to the P2likevirus major tail tube protein family.

The protein localises to the virion. Its function is as follows. Forms the virus tail tube. The polypeptide is Tail tube protein (FII) (Escherichia phage P2 (Bacteriophage P2)).